A 109-amino-acid polypeptide reads, in one-letter code: Large ribosomal subunit protein uL1 (109 aa).

Belongs to the universal ribosomal protein uL1 family. Part of the 50S ribosomal subunit.

Functionally, binds directly to 23S rRNA. The L1 stalk is quite mobile in the ribosome, and is involved in E site tRNA release. Protein L1 is also a translational repressor protein, it controls the translation of the L11 operon by binding to its mRNA. This is Large ribosomal subunit protein uL1 (rplA) from Aquifex pyrophilus.